Here is a 338-residue protein sequence, read N- to C-terminus: Biotin synthase (338 aa).

The 225-residue stretch at 46–270 (NEVQLSTLLS…VAVARITMPA (225 aa)) folds into the Radical SAM core domain. Residues Cys-61, Cys-65, and Cys-68 each coordinate [4Fe-4S] cluster. Cys-105, Cys-136, Cys-196, and Arg-274 together coordinate [2Fe-2S] cluster.

It belongs to the radical SAM superfamily. Biotin synthase family. Homodimer. Requires [4Fe-4S] cluster as cofactor. It depends on [2Fe-2S] cluster as a cofactor.

It carries out the reaction (4R,5S)-dethiobiotin + (sulfur carrier)-SH + 2 reduced [2Fe-2S]-[ferredoxin] + 2 S-adenosyl-L-methionine = (sulfur carrier)-H + biotin + 2 5'-deoxyadenosine + 2 L-methionine + 2 oxidized [2Fe-2S]-[ferredoxin]. Its pathway is cofactor biosynthesis; biotin biosynthesis; biotin from 7,8-diaminononanoate: step 2/2. Catalyzes the conversion of dethiobiotin (DTB) to biotin by the insertion of a sulfur atom into dethiobiotin via a radical-based mechanism. In Rhizorhabdus wittichii (strain DSM 6014 / CCUG 31198 / JCM 15750 / NBRC 105917 / EY 4224 / RW1) (Sphingomonas wittichii), this protein is Biotin synthase.